A 173-amino-acid polypeptide reads, in one-letter code: Ribosome maturation factor RimM (173 aa).

Positions 98–170 (EDEYYWCDLL…RMTVSLPEGL (73 aa)) constitute a PRC barrel domain.

This sequence belongs to the RimM family. Binds ribosomal protein uS19.

The protein localises to the cytoplasm. An accessory protein needed during the final step in the assembly of 30S ribosomal subunit, possibly for assembly of the head region. Essential for efficient processing of 16S rRNA. May be needed both before and after RbfA during the maturation of 16S rRNA. It has affinity for free ribosomal 30S subunits but not for 70S ribosomes. This chain is Ribosome maturation factor RimM, found in Geotalea uraniireducens (strain Rf4) (Geobacter uraniireducens).